The following is a 192-amino-acid chain: uncharacterized protein (192 aa).

It localises to the virion. This is an uncharacterized protein from Acanthamoeba polyphaga mimivirus (APMV).